The chain runs to 273 residues: MNNRVHQGHLARKRFGQNFLNDQFVIDSIVSAINPQKGQAMVEIGPGLAALTEPVGERLDQLTVIELDRDLAARLQTHPFLGPKLTIYQQDAMTFNFGELAAKMGQPLRVFGNLPYNISTPLMFHLFSYTDAIADMHFMLQKEVVNRLVAGPNSKAYGRLSVMAQYYCNVIPVLEVPPSAFTPPPKVDSAVVRLVPHATMPHPVKDVRVLSRITTEAFNQRRKTIRNSLGNLFSVEVLTGMGIDPAMRAENISVAQYCQMANYLAENAPLQES.

S-adenosyl-L-methionine contacts are provided by N18, L20, G45, E66, D91, and N113.

It belongs to the class I-like SAM-binding methyltransferase superfamily. rRNA adenine N(6)-methyltransferase family. RsmA subfamily.

Its subcellular location is the cytoplasm. The enzyme catalyses adenosine(1518)/adenosine(1519) in 16S rRNA + 4 S-adenosyl-L-methionine = N(6)-dimethyladenosine(1518)/N(6)-dimethyladenosine(1519) in 16S rRNA + 4 S-adenosyl-L-homocysteine + 4 H(+). Its function is as follows. Specifically dimethylates two adjacent adenosines (A1518 and A1519) in the loop of a conserved hairpin near the 3'-end of 16S rRNA in the 30S particle. May play a critical role in biogenesis of 30S subunits. The chain is Ribosomal RNA small subunit methyltransferase A from Escherichia coli O1:K1 / APEC.